Consider the following 556-residue polypeptide: Peptide chain release factor 3 (556 aa).

The tr-type G domain occupies 28-297; it reads QQRRNFAIIS…AFLDYALKPG (270 aa). Residues 37 to 44, 105 to 109, and 159 to 162 contribute to the GTP site; these read SHPDAGKT, DTPGH, and NKMD.

The protein belongs to the TRAFAC class translation factor GTPase superfamily. Classic translation factor GTPase family. PrfC subfamily.

It is found in the cytoplasm. Functionally, increases the formation of ribosomal termination complexes and stimulates activities of RF-1 and RF-2. It binds guanine nucleotides and has strong preference for UGA stop codons. It may interact directly with the ribosome. The stimulation of RF-1 and RF-2 is significantly reduced by GTP and GDP, but not by GMP. The protein is Peptide chain release factor 3 of Synechococcus sp. (strain ATCC 27144 / PCC 6301 / SAUG 1402/1) (Anacystis nidulans).